The sequence spans 556 residues: Probable zinc metalloprotease EGY2, chloroplastic (556 aa).

The transit peptide at 1-64 directs the protein to the chloroplast; the sequence is MNLAVASFRG…VFRKRETLVR (64 aa). Positions 63–133 are disordered; the sequence is VRVTETQTEP…DGDKLEVSSG (71 aa). 7 helical membrane-spanning segments follow: residues 267 to 287, 311 to 331, 336 to 356, 374 to 394, 437 to 457, 484 to 504, and 527 to 547; these read AVPEWFAAGSFGLVALFTLFL, LPGALVTALVLGVHELGHILV, GIKLGVPFFVPSWQIGSFGAI, AAGPLAGFSLGLILFLIGLFV, PLVIWAWAGLLINGINSIPAG, LLGLSALFSDVAFYWVVLIFF, and LGILVLFLSLLVCLPYPFAFT.

Belongs to the peptidase M50B family.

It is found in the plastid. It localises to the chloroplast membrane. Functionally, probable membrane-associated metalloprotease that may be involved in chloroplast development. This Arabidopsis thaliana (Mouse-ear cress) protein is Probable zinc metalloprotease EGY2, chloroplastic (EGY2).